A 154-amino-acid polypeptide reads, in one-letter code: MHCPFCGANDTKVIDSRLVAEGEQVRRRRECVACGERFTTFETAELVLPRLIKQDGTRQPFDEEKLRAGMQRALEKRPVSVERLEAALAHIKSRLRATGEREVKSLVVGELVMAELRKLDEVAYIRFASVYRRFQDLDEFREEIDRLAREPAKE.

A zinc finger lies at 3 to 34 (CPFCGANDTKVIDSRLVAEGEQVRRRRECVAC). The region spanning 49-139 (PRLIKQDGTR…VYRRFQDLDE (91 aa)) is the ATP-cone domain.

The protein belongs to the NrdR family. Requires Zn(2+) as cofactor.

Its function is as follows. Negatively regulates transcription of bacterial ribonucleotide reductase nrd genes and operons by binding to NrdR-boxes. The sequence is that of Transcriptional repressor NrdR from Pseudomonas putida (strain W619).